The following is a 204-amino-acid chain: ATP phosphoribosyltransferase (204 aa).

Belongs to the ATP phosphoribosyltransferase family. Short subfamily. Heteromultimer composed of HisG and HisZ subunits.

Its subcellular location is the cytoplasm. It catalyses the reaction 1-(5-phospho-beta-D-ribosyl)-ATP + diphosphate = 5-phospho-alpha-D-ribose 1-diphosphate + ATP. It functions in the pathway amino-acid biosynthesis; L-histidine biosynthesis; L-histidine from 5-phospho-alpha-D-ribose 1-diphosphate: step 1/9. In terms of biological role, catalyzes the condensation of ATP and 5-phosphoribose 1-diphosphate to form N'-(5'-phosphoribosyl)-ATP (PR-ATP). Has a crucial role in the pathway because the rate of histidine biosynthesis seems to be controlled primarily by regulation of HisG enzymatic activity. The polypeptide is ATP phosphoribosyltransferase (Campylobacter concisus (strain 13826)).